A 1408-amino-acid chain; its full sequence is DNA-directed RNA polymerase subunit beta' (1408 aa).

4 residues coordinate Zn(2+): Cys-70, Cys-72, Cys-85, and Cys-88. Residues Asp-460, Asp-462, and Asp-464 each contribute to the Mg(2+) site. Positions 814, 888, 895, and 898 each coordinate Zn(2+).

It belongs to the RNA polymerase beta' chain family. The RNAP catalytic core consists of 2 alpha, 1 beta, 1 beta' and 1 omega subunit. When a sigma factor is associated with the core the holoenzyme is formed, which can initiate transcription. It depends on Mg(2+) as a cofactor. Zn(2+) serves as cofactor.

The catalysed reaction is RNA(n) + a ribonucleoside 5'-triphosphate = RNA(n+1) + diphosphate. DNA-dependent RNA polymerase catalyzes the transcription of DNA into RNA using the four ribonucleoside triphosphates as substrates. The polypeptide is DNA-directed RNA polymerase subunit beta' (Baumannia cicadellinicola subsp. Homalodisca coagulata).